Reading from the N-terminus, the 360-residue chain is Phosphoserine aminotransferase (360 aa).

Arg41 provides a ligand contact to L-glutamate. Pyridoxal 5'-phosphate is bound by residues 75-76 (AS), Trp99, Thr152, Asp171, and Gln194. At Lys195 the chain carries N6-(pyridoxal phosphate)lysine. Residue 236-237 (NT) coordinates pyridoxal 5'-phosphate.

This sequence belongs to the class-V pyridoxal-phosphate-dependent aminotransferase family. SerC subfamily. In terms of assembly, homodimer. It depends on pyridoxal 5'-phosphate as a cofactor.

It localises to the cytoplasm. It catalyses the reaction O-phospho-L-serine + 2-oxoglutarate = 3-phosphooxypyruvate + L-glutamate. The enzyme catalyses 4-(phosphooxy)-L-threonine + 2-oxoglutarate = (R)-3-hydroxy-2-oxo-4-phosphooxybutanoate + L-glutamate. Its pathway is amino-acid biosynthesis; L-serine biosynthesis; L-serine from 3-phospho-D-glycerate: step 2/3. It participates in cofactor biosynthesis; pyridoxine 5'-phosphate biosynthesis; pyridoxine 5'-phosphate from D-erythrose 4-phosphate: step 3/5. Catalyzes the reversible conversion of 3-phosphohydroxypyruvate to phosphoserine and of 3-hydroxy-2-oxo-4-phosphonooxybutanoate to phosphohydroxythreonine. This chain is Phosphoserine aminotransferase, found in Porphyromonas gingivalis (strain ATCC 33277 / DSM 20709 / CIP 103683 / JCM 12257 / NCTC 11834 / 2561).